The primary structure comprises 744 residues: MASEGTNIPSPVVRQIDKQFLICSICLERYKNPKVLPCLHTFCERCLQNYIPAHSLTLSCPVCRQTSILPEKGVAALQNNFFITNLMDVLQRTPGSNAEESSILETVTAVAAGKPLSCPNHDGNVMEFYCQSCETAMCRECTEGEHAEHPTVPLKDVVEQHKASLQVQLDAVNKRLPEIDSALQFISEIIHQLTNQKASIVDDIHSTFDELQKTLNVRKSVLLMELEVNYGLKHKVLQSQLDTLLQGQESIKSCSNFTAQALNHGTETEVLLVKKQMSEKLNELADQDFPLHPRENDQLDFIVETEGLKKSIHNLGTILTTNAVASETVATGEGLRQTIIGQPMSVTITTKDKDGELCKTGNAYLTAELSTPDGSVADGEILDNKNGTYEFLYTVQKEGDFTLSLRLYDQHIRGSPFKLKVIRSADVSPTTEGVKRRVKSPGSGHVKQKAVKRPASMYSTGKRKENPIEDDLIFRVGTKGRNKGEFTNLQGVAASTNGKILIADSNNQCVQIFSNDGQFKSRFGIRGRSPGQLQRPTGVAVHPSGDIIIADYDNKWVSIFSSDGKFKTKIGSGKLMGPKGVSVDRNGHIIVVDNKACCVFIFQPNGKIVTRFGSRGNGDRQFAGPHFAAVNSNNEIIITDFHNHSVKVFNQEGEFMLKFGSNGEGNGQFNAPTGVAVDSNGNIIVADWGNSRIQVFDGSGSFLSYINTSADPLYGPQGLALTSDGHVVVADSGNHCFKVYRYLQ.

Serine 10 is subject to Phosphoserine. The RING-type zinc finger occupies 23 to 64 (CSICLERYKNPKVLPCLHTFCERCLQNYIPAHSLTLSCPVCR). Residues 113–154 (GKPLSCPNHDGNVMEFYCQSCETAMCRECTEGEHAEHPTVPL) form a B box-type zinc finger. Zn(2+) is bound by residues cysteine 118, histidine 121, cysteine 141, and histidine 146. Residues 320-421 (TTNAVASETV…IRGSPFKLKV (102 aa)) form a Filamin repeat. The residue at position 371 (threonine 371) is a Phosphothreonine. 3 positions are modified to phosphoserine: serine 375, serine 424, and serine 428. Residues 432 to 462 (EGVKRRVKSPGSGHVKQKAVKRPASMYSTGK) are disordered. NHL repeat units follow at residues 473-516 (IFRV…FSND), 520-563 (KSRF…FSSD), 564-605 (GKFK…FQPN), 609-652 (VTRF…FNQE), 656-699 (MLKF…FDGS), and 700-743 (GSFL…YRYL).

The protein belongs to the TRIM/RBCC family. Forms homooligomers. Interacts with TRIM3; this interaction reduces TRIM2 activity. Interacts with myosin V; myosin V may not be a substrate for ubiquitination. Interacts with NEFL. Interacts with phosphorylated BCL2L11. Interacts with SIRPA. In terms of processing, RING-type zinc finger-dependent and UBE2D1-dependent autoubiquitination.

The protein localises to the cytoplasm. It carries out the reaction S-ubiquitinyl-[E2 ubiquitin-conjugating enzyme]-L-cysteine + [acceptor protein]-L-lysine = [E2 ubiquitin-conjugating enzyme]-L-cysteine + N(6)-ubiquitinyl-[acceptor protein]-L-lysine.. The protein operates within protein modification; protein ubiquitination. Its function is as follows. UBE2D1-dependent E3 ubiquitin-protein ligase that mediates the ubiquitination of NEFL and of phosphorylated BCL2L11. Plays a neuroprotective function. May play a role in neuronal rapid ischemic tolerance. Plays a role in antiviral immunity and limits New World arenavirus infection independently of its ubiquitin ligase activity. This chain is Tripartite motif-containing protein 2 (TRIM2), found in Homo sapiens (Human).